We begin with the raw amino-acid sequence, 859 residues long: ATP-dependent RNA helicase DDX24 (859 aa).

Position 17 is an N6-acetyllysine (lysine 17). Serine 60 is subject to Phosphoserine. Residues 61–170 (PAKNPSSLFS…KGLEPSQSTA (110 aa)) form a disordered region. Position 71 is an N6-acetyllysine (lysine 71). Phosphoserine occurs at positions 82 and 94. The span at 94-105 (SPKKKIKLKKSK) shows a compositional bias: basic residues. Over residues 106-115 (NVATEGTSTQ) the composition is skewed to polar residues. Residues 125–139 (LEAQGDDMVCDDPEA) show a composition bias toward acidic residues. The Q motif signature appears at 192–220 (SAWKDLFVPRPVLRALSFLGFSAPTPIQA). The Helicase ATP-binding domain occupies 224–528 (APAIRDKLDI…RILHKKHTKK (305 aa)). 237 to 244 (AETGSGKT) is an ATP binding site. The interval 262 to 300 (NAAPPPSNTEAPPGETRTEAGAETRSPGKAEAESDALPD) is disordered. The span at 277 to 293 (TRTEAGAETRSPGKAEA) shows a compositional bias: basic and acidic residues. Residues serine 287 and serine 295 each carry the phosphoserine modification. A Phosphothreonine modification is found at threonine 302. The tract at residues 326–376 (SDQALLFGDDDAGEGPSSLIREKPVPKQNENEEENLDKEQTGNLKQELDDK) is disordered. Lysine 370 participates in a covalent cross-link: Glycyl lysine isopeptide (Lys-Gly) (interchain with G-Cter in SUMO2). The short motif at 471–474 (DEAD) is the DEAD box element. Residues 578-723 (YLYYFLMQYP…LFPVQTKYMD (146 aa)) form the Helicase C-terminal domain. Residues lysine 624, lysine 808, and lysine 825 each participate in a glycyl lysine isopeptide (Lys-Gly) (interchain with G-Cter in SUMO2) cross-link. Composition is skewed to polar residues over residues 799–814 (PLFT…TQSG) and 823–833 (PSKSESALSCL). The segment at 799-859 (PLFTESQKTK…EQPQPSTSAN (61 aa)) is disordered.

This sequence belongs to the DEAD box helicase family. DDX24/MAK5 subfamily. In terms of assembly, interacts with FADD. Interacts with RIPK1; this interaction disrupts RLR signaling activation of IFN-dependent transcription factor IRF7. Interacts with NIP7. Interacts with EP300; this interaction prevents TP53 acetylation mediated by EP300. As to quaternary structure, (Microbial infection) Interacts with HIV-1 virus Gag and Rev proteins. Ubiquitinated by MDM2 without targeting DDX24 for proteasomal degradation. Instead, polyubiquitinated DDX24 promotes interaction with NIP7, a component of pre-rRNP processing complex, and associates with pre-rRNA molecules and pre-ribosomal particles. As to expression, ubiquitous. Most abundant in heart and brain, but with lowest levels in thymus and small intestine.

It localises to the cytoplasm. The protein resides in the nucleus. It catalyses the reaction ATP + H2O = ADP + phosphate + H(+). Functionally, ATP-dependent RNA helicase that plays a role in various aspects of RNA metabolism including pre-mRNA splicing and is thereby involved in different biological processes such as cell cycle regulation or innate immunity. Plays an inhibitory role in TP53 transcriptional activity and subsequently in TP53 controlled cell growth arrest and senescence by inhibiting its EP300 mediated acetylation. Negatively regulates cytosolic RNA-mediated innate immune signaling at least in part by affecting RIPK1/IRF7 interactions. Alternatively, possesses antiviral activity by recognizing gammaherpesvirus transcripts in the context of lytic reactivation. Plays an essential role in cell cycle regulation in vascular smooth muscle cells by interacting with and regulating FANCA (Fanconi anemia complementation group A) mRNA. (Microbial infection) Plays a positive role in HIV-1 infection by promoting Rev-dependent nuclear export of viral RNAs and their packaging into virus particles. In Homo sapiens (Human), this protein is ATP-dependent RNA helicase DDX24 (DDX24).